A 366-amino-acid polypeptide reads, in one-letter code: E3 ubiquitin-protein ligase SINA-like 1 (366 aa).

Residues 1 to 37 (MVKGTNAEQALAREEASSSRPKRQRVPSIVEEEGENG) form a disordered region. Residues 56-92 (CPICCNALTIPIFQCDKGHIACSSCCTNVSNKCPYCS) form an RING-type; degenerate zinc finger. Residues 106–354 (VVEAFIVRCP…KGTYICIRSL (249 aa)) form an SBD region. The SIAH-type; degenerate zinc finger occupies 109-232 (AFIVRCPIVA…LYSHYAANHK (124 aa)). Positions 114, 186, 198, 202, 209, 214, 226, and 231 each coordinate Zn(2+).

It belongs to the SINA (Seven in absentia) family.

The catalysed reaction is S-ubiquitinyl-[E2 ubiquitin-conjugating enzyme]-L-cysteine + [acceptor protein]-L-lysine = [E2 ubiquitin-conjugating enzyme]-L-cysteine + N(6)-ubiquitinyl-[acceptor protein]-L-lysine.. It functions in the pathway protein modification; protein ubiquitination. In terms of biological role, E3 ubiquitin-protein ligase that mediates ubiquitination and subsequent proteasomal degradation of target proteins. E3 ubiquitin ligases accept ubiquitin from an E2 ubiquitin-conjugating enzyme in the form of a thioester and then directly transfers the ubiquitin to targeted substrates. It probably triggers the ubiquitin-mediated degradation of different substrates. This Arabidopsis thaliana (Mouse-ear cress) protein is E3 ubiquitin-protein ligase SINA-like 1.